A 354-amino-acid chain; its full sequence is Fructose-bisphosphate aldolase (354 aa).

Ser-61 is a binding site for D-glyceraldehyde 3-phosphate. Asp-104 serves as the catalytic Proton donor. Positions 105, 139, 169, and 221 each coordinate Zn(2+). Gly-222 is a binding site for dihydroxyacetone phosphate. His-260 contacts Zn(2+). Residues 261-263 and 282-285 each bind dihydroxyacetone phosphate; these read GGS and NIDT.

It belongs to the class II fructose-bisphosphate aldolase family. In terms of assembly, homodimer. It depends on Zn(2+) as a cofactor.

It carries out the reaction beta-D-fructose 1,6-bisphosphate = D-glyceraldehyde 3-phosphate + dihydroxyacetone phosphate. It participates in carbohydrate degradation; glycolysis; D-glyceraldehyde 3-phosphate and glycerone phosphate from D-glucose: step 4/4. Functionally, catalyzes the aldol condensation of dihydroxyacetone phosphate (DHAP or glycerone-phosphate) with glyceraldehyde 3-phosphate (G3P) to form fructose 1,6-bisphosphate (FBP) in gluconeogenesis and the reverse reaction in glycolysis. The polypeptide is Fructose-bisphosphate aldolase (fba) (Campylobacter jejuni subsp. jejuni serotype O:2 (strain ATCC 700819 / NCTC 11168)).